Here is a 348-residue protein sequence, read N- to C-terminus: MEFVTNYTLEELKKRFTELGLEPYRAKQVFRWVYKKFVTDFEKMTDLGKKHRELLKEHFAFHPLEKLDRVEAPDAVKYLFKTKDGHILETVLIKERDHYTLCVSSQIGCAVGCTFCATALDGLKRNLSTAEIIDQYLQVQQDLGEEKIRNVVFMGMGEPLANYENVRKAVEIMVSPEGLDLSKRRITISTSGIVAQIKRMAQDPVMKEVNLAVSLNAVSQKKREELMPLTKTNTLEELMEVLKNYPLPKYRRITLEYVLIKGVNDSPNDAERLAKLIGRHKKKFKVNLIPFNPDPNLPYERPALTDIMKFQKVLWKYGISNFVRFSKGVEVFGACGQLRTQRLQLQRV.

Catalysis depends on glutamate 89, which acts as the Proton acceptor. The region spanning 95-330 (ERDHYTLCVS…NFVRFSKGVE (236 aa)) is the Radical SAM core domain. Cysteine 102 and cysteine 335 are disulfide-bonded. The [4Fe-4S] cluster site is built by cysteine 109, cysteine 113, and cysteine 116. Residues 157–158 (GE), serine 189, 214–216 (SLN), and asparagine 292 contribute to the S-adenosyl-L-methionine site. Cysteine 335 functions as the S-methylcysteine intermediate in the catalytic mechanism.

Belongs to the radical SAM superfamily. RlmN family. [4Fe-4S] cluster is required as a cofactor.

It localises to the cytoplasm. The catalysed reaction is adenosine(2503) in 23S rRNA + 2 reduced [2Fe-2S]-[ferredoxin] + 2 S-adenosyl-L-methionine = 2-methyladenosine(2503) in 23S rRNA + 5'-deoxyadenosine + L-methionine + 2 oxidized [2Fe-2S]-[ferredoxin] + S-adenosyl-L-homocysteine. It catalyses the reaction adenosine(37) in tRNA + 2 reduced [2Fe-2S]-[ferredoxin] + 2 S-adenosyl-L-methionine = 2-methyladenosine(37) in tRNA + 5'-deoxyadenosine + L-methionine + 2 oxidized [2Fe-2S]-[ferredoxin] + S-adenosyl-L-homocysteine. Its function is as follows. Specifically methylates position 2 of adenine 2503 in 23S rRNA and position 2 of adenine 37 in tRNAs. The protein is Probable dual-specificity RNA methyltransferase RlmN of Aquifex aeolicus (strain VF5).